The following is a 493-amino-acid chain: uncharacterized protein (493 aa).

Residues 96–124 (TTVAKASPPPAKPASAPTEITWKGSPQFT) form a disordered region.

This is an uncharacterized protein from Caulobacter vibrioides (strain ATCC 19089 / CIP 103742 / CB 15) (Caulobacter crescentus).